The following is a 397-amino-acid chain: 1-deoxy-D-xylulose 5-phosphate reductoisomerase (397 aa).

The NADPH site is built by Ser-10, Gly-11, Ser-12, Ile-13, Ala-36, Arg-37, and Asn-124. Lys-125 contacts 1-deoxy-D-xylulose 5-phosphate. Glu-126 contacts NADPH. Asp-150 is a binding site for Mn(2+). 1-deoxy-D-xylulose 5-phosphate contacts are provided by Ser-151, Glu-152, Ser-186, and His-209. A Mn(2+)-binding site is contributed by Glu-152. Residue Gly-215 participates in NADPH binding. 4 residues coordinate 1-deoxy-D-xylulose 5-phosphate: Ser-222, Asn-227, Lys-228, and Glu-231. Glu-231 is a binding site for Mn(2+).

The protein belongs to the DXR family. Mg(2+) is required as a cofactor. It depends on Mn(2+) as a cofactor.

It carries out the reaction 2-C-methyl-D-erythritol 4-phosphate + NADP(+) = 1-deoxy-D-xylulose 5-phosphate + NADPH + H(+). The protein operates within isoprenoid biosynthesis; isopentenyl diphosphate biosynthesis via DXP pathway; isopentenyl diphosphate from 1-deoxy-D-xylulose 5-phosphate: step 1/6. Functionally, catalyzes the NADPH-dependent rearrangement and reduction of 1-deoxy-D-xylulose-5-phosphate (DXP) to 2-C-methyl-D-erythritol 4-phosphate (MEP). The polypeptide is 1-deoxy-D-xylulose 5-phosphate reductoisomerase (Aeromonas salmonicida (strain A449)).